The sequence spans 255 residues: tRNA (guanine-N(7)-)-methyltransferase (255 aa).

A disordered region spans residues 1–29 (MMHDDPNEAGLPPDDAALPDEAADGADEV). The span at 17–27 (ALPDEAADGAD) shows a compositional bias: acidic residues. Positions 86, 111, 138, and 161 each coordinate S-adenosyl-L-methionine. The active site involves Asp161. Substrate is bound by residues Lys165, Asp197, and 232–235 (TKFE).

This sequence belongs to the class I-like SAM-binding methyltransferase superfamily. TrmB family.

The enzyme catalyses guanosine(46) in tRNA + S-adenosyl-L-methionine = N(7)-methylguanosine(46) in tRNA + S-adenosyl-L-homocysteine. The protein operates within tRNA modification; N(7)-methylguanine-tRNA biosynthesis. Functionally, catalyzes the formation of N(7)-methylguanine at position 46 (m7G46) in tRNA. In Burkholderia ambifaria (strain ATCC BAA-244 / DSM 16087 / CCUG 44356 / LMG 19182 / AMMD) (Burkholderia cepacia (strain AMMD)), this protein is tRNA (guanine-N(7)-)-methyltransferase.